The primary structure comprises 327 residues: DNA-directed RNA polymerase subunit alpha (327 aa).

An alpha N-terminal domain (alpha-NTD) region spans residues 1-242; it reads MRKFLKYQLD…AHLEPIVNID (242 aa). Residues 259–327 form an alpha C-terminal domain (alpha-CTD) region; the sequence is KRQNASISID…TERSLELKKD (69 aa).

Belongs to the RNA polymerase alpha chain family. Homodimer. The RNAP catalytic core consists of 2 alpha, 1 beta, 1 beta' and 1 omega subunit. When a sigma factor is associated with the core the holoenzyme is formed, which can initiate transcription.

The enzyme catalyses RNA(n) + a ribonucleoside 5'-triphosphate = RNA(n+1) + diphosphate. In terms of biological role, DNA-dependent RNA polymerase catalyzes the transcription of DNA into RNA using the four ribonucleoside triphosphates as substrates. This is DNA-directed RNA polymerase subunit alpha from Ureaplasma parvum serovar 3 (strain ATCC 700970).